The following is a 297-amino-acid chain: uncharacterized protein (297 aa).

7 helical membrane-spanning segments follow: residues 14–34 (LFLMFIGTVSFLFIFIPFLKF), 55–75 (LLLGPIYGFFAVMLVTLIYFF), 81–101 (FYFGIYSLIPPTLAVISAGAL), 110–130 (AIILIVGLLLFYLTDVGRVAF), 135–155 (LSTLALLLILIFREKISKLLF), 163–183 (IVGATILSFSSVMTDHLYGSI), and 208–228 (LIMTVIGAFFVIFAIEISKCF).

It localises to the cell membrane. This is an uncharacterized protein from Methanocaldococcus jannaschii (strain ATCC 43067 / DSM 2661 / JAL-1 / JCM 10045 / NBRC 100440) (Methanococcus jannaschii).